A 291-amino-acid chain; its full sequence is 29 kDa ribonucleoprotein B, chloroplastic (291 aa).

The RRM 1 domain maps to 87–165 (LKLFVGNLPF…RAIRVNAGPA (79 aa)). Positions 164-202 (PAPAKRENSSFGGGRGGNSSYGGGRDGNSSFGGARGGRS) are disordered. A linker (Gly-rich) region spans residues 166-206 (PAKRENSSFGGGRGGNSSYGGGRDGNSSFGGARGGRSVDSS). Residues 174–189 (FGGGRGGNSSYGGGRD) are compositionally biased toward gly residues. The region spanning 207-285 (NRVYVGNLSW…RSIRVSAAEE (79 aa)) is the RRM 2 domain.

The protein localises to the plastid. The protein resides in the chloroplast. Its function is as follows. Could be involved in splicing and/or processing of chloroplast RNA's. In Nicotiana sylvestris (Wood tobacco), this protein is 29 kDa ribonucleoprotein B, chloroplastic.